The sequence spans 316 residues: Iron-sulfur cluster assembly SufBD family protein MJ0034 (316 aa).

The protein belongs to the iron-sulfur cluster assembly SufBD family.

The chain is Iron-sulfur cluster assembly SufBD family protein MJ0034 from Methanocaldococcus jannaschii (strain ATCC 43067 / DSM 2661 / JAL-1 / JCM 10045 / NBRC 100440) (Methanococcus jannaschii).